A 195-amino-acid polypeptide reads, in one-letter code: MRLAEVVRNTSETQIRVKINLDGTGQQKLATGVPFLDHMLDQIARHGLFDLEIEAHGDLHIDDHHTVEDTGITLGQAVAKAIGDRKGIVRYGHSYVPLDEALSRVVIDFSGRPGLEFHVPFTRARIGTFDVDLSIEFFRGFVNHAGVTLHIDNLRGLNAHHQMETVFKAFGRALRMATELDERAAGQIPSTKGSL.

This sequence belongs to the imidazoleglycerol-phosphate dehydratase family.

The protein resides in the cytoplasm. The catalysed reaction is D-erythro-1-(imidazol-4-yl)glycerol 3-phosphate = 3-(imidazol-4-yl)-2-oxopropyl phosphate + H2O. It functions in the pathway amino-acid biosynthesis; L-histidine biosynthesis; L-histidine from 5-phospho-alpha-D-ribose 1-diphosphate: step 6/9. The polypeptide is Imidazoleglycerol-phosphate dehydratase (Paraburkholderia phytofirmans (strain DSM 17436 / LMG 22146 / PsJN) (Burkholderia phytofirmans)).